We begin with the raw amino-acid sequence, 359 residues long: Mitochondrial glutathione transporter SLC25A39 (359 aa).

Topologically, residues 1-14 (MADQDPGGISPLQQ) are mitochondrial intermembrane. Solcar repeat units follow at residues 9–151 (ISPL…LKAF), 159–243 (SDLY…VKSW), and 253–347 (TSVG…GKNF). The chain crosses the membrane as a helical span at residues 15–35 (MVASGAGAVVTSLFMTPLDVV). Over 36 to 121 (KVRLQSQRPS…VKIVRHEGTR (86 aa)) the chain is Mitochondrial matrix. [2Fe-2S] cluster-binding residues include Cys-74, Cys-78, Cys-88, and Cys-94. Residues 122-142 (TLWSGLPATLVMTVPATAAYF) traverse the membrane as a helical segment. The Mitochondrial intermembrane segment spans residues 143–164 (TAYDQLKAFLCGRALTSDLYAP). The helical transmembrane segment at 165-185 (MVAGALARLGTVTVISPLELV) threads the bilayer. Over 186–214 (RTKLQAQHLSYRELGTCVRAAVAQGGWRS) the chain is Mitochondrial matrix. A helical transmembrane segment spans residues 215 to 235 (LWLGWGPTALRDVPFSALYWF). Topologically, residues 236–255 (NYELVKSWLSGLRPKDQTSV) are mitochondrial intermembrane. The helical transmembrane segment at 256–276 (GISFVAGGISGMVAATLTLPF) threads the bilayer. Over 277-317 (DVVKTQRQVALGAVEALRVMPLNTDSTWLLLRRILAESGTR) the chain is Mitochondrial matrix. A helical membrane pass occupies residues 318-338 (GLFAGFLPRIIKAAPSCAIMI). Over 339–359 (STYEFGKNFFQRLNREQLLSP) the chain is Mitochondrial intermembrane.

The protein belongs to the mitochondrial carrier (TC 2.A.29) family. Cleaved and degraded by AFG3L2; degradation by AFG3L2 is regulated by the ability of SLC25A39 to bind iron-sulfur. In absence of mitochondrial glutathione, SLC25A39 binds iron-sulfur, preventing cleavage and degradation by AFG3L2. The presence of mitochondrial glutathione prevents iron-sulfur-binding to SLC25A39, promoting cleavage and degradation by AFG3L2.

It is found in the mitochondrion inner membrane. The enzyme catalyses glutathione(in) = glutathione(out). With respect to regulation, the activity of SLC25A39 is regulated by levels of mitochondrial glutathione via its ability to bind [2Fe-2S] iron-sulfur cluster. Upon physiological levels of mitochondrial glutathione, glutathione prevents iron-sulfur-binding to SLC25A39 promoting cleavage and degradation by AFG3L2. Upon depletion of mitochondrial glutathione, SLC25A39 binds iron-sulfur, preventing cleavage and degradation by AFG3L2. In terms of biological role, mitochondrial transporter required for glutathione import into mitochondria. Glutathione, which plays key roles in oxidative metabolism, is produced exclusively in the cytosol and is imported in many organelles. Mitochondrial glutathione is required for the activity and stability of proteins containing iron-sulfur clusters, as well as erythropoiesis. This Bos taurus (Bovine) protein is Mitochondrial glutathione transporter SLC25A39 (SLC25A39).